The following is a 77-amino-acid chain: Translation initiation factor IF-1, chloroplastic (77 aa).

An S1-like domain is found at 1 to 71; that stretch reads MKEQKWIHEG…TKGRIIYRIR (71 aa).

This sequence belongs to the IF-1 family. As to quaternary structure, component of the 30S ribosomal translation pre-initiation complex which assembles on the 30S ribosome in the order IF-2 and IF-3, IF-1 and N-formylmethionyl-tRNA(fMet); mRNA recruitment can occur at any time during PIC assembly.

It localises to the plastid. The protein localises to the chloroplast. Its function is as follows. One of the essential components for the initiation of protein synthesis. Stabilizes the binding of IF-2 and IF-3 on the 30S subunit to which N-formylmethionyl-tRNA(fMet) subsequently binds. Helps modulate mRNA selection, yielding the 30S pre-initiation complex (PIC). Upon addition of the 50S ribosomal subunit IF-1, IF-2 and IF-3 are released leaving the mature 70S translation initiation complex. In Vitis vinifera (Grape), this protein is Translation initiation factor IF-1, chloroplastic.